The following is a 371-amino-acid chain: Cytochrome b (371 aa).

Transmembrane regions (helical) follow at residues 25-45, 69-90, 105-125, and 170-190; these read FGSMLLACTSMQVLTGFFLAV, WMMQNLHAIGASMFFICIYIHI, WLSGTTLLIMLMATAFFGYVL, and FSALHFILSFGIISLLSLHIM. Histidine 75 and histidine 89 together coordinate heme b. Heme b-binding residues include histidine 174 and histidine 188. Histidine 193 lines the a ubiquinone pocket. 4 consecutive transmembrane segments (helical) span residues 218–238, 280–300, 312–332, and 339–358; these read YKDLLMLSLVILMLLMTVSFL, LGGALALAMSIMILLTAPFTH, IMQLMFWTLVATFAVITWSAT, and FTVISQIASTIYFLFLIMNP.

This sequence belongs to the cytochrome b family. In terms of assembly, the cytochrome bc1 complex contains 3 respiratory subunits (MT-CYB, CYC1 and UQCRFS1), 2 core proteins (UQCRC1 and UQCRC2) and probably 6 low-molecular weight proteins. Requires heme b as cofactor.

The protein resides in the mitochondrion inner membrane. Its function is as follows. Component of the ubiquinol-cytochrome c reductase complex (complex III or cytochrome b-c1 complex) that is part of the mitochondrial respiratory chain. The b-c1 complex mediates electron transfer from ubiquinol to cytochrome c. Contributes to the generation of a proton gradient across the mitochondrial membrane that is then used for ATP synthesis. In Eryx elegans (Central Asian sand boa), this protein is Cytochrome b (MT-CYB).